The following is a 387-amino-acid chain: MEKVVIVDAVRTPMGRSKGGAFRQVRAEDLSAHLMRSLLSRNAALDAREIDDIYWGCVQQTLEQGFNVARNAALLAEIPMNVPATTVNRLCGSSMQALHDAARTIMVGDADVCLIGGVEHMGHVPMNHGVDFHPGLSRTIAKAAGMMGLTAEMLGRMHNISREMQDQFAARSHQRAHHATQSGAFRHEIIPTAGHDADGALQRFDYDEVIRPDTTVDSLAALKPAFDPVNGTVTAGSSSALSDGAAAMLIMSESRAASLGLPVRARIRAMAVVGCDPSIMGYGPVPATKLALKRAGLSLSDIGLFELNEAFAAQTLPCIKDLGLLEQIDEKVNLNGGAIALGHPLGCSGARISTTLINLMESRDVQFGVATMCIGLGQGIATVFERV.

Residue Cys91 is the Acyl-thioester intermediate of the active site. Residues His343 and Cys373 each act as proton acceptor in the active site.

Belongs to the thiolase-like superfamily. Thiolase family. Heterotetramer of two alpha chains (FadB) and two beta chains (FadA).

It is found in the cytoplasm. The enzyme catalyses an acyl-CoA + acetyl-CoA = a 3-oxoacyl-CoA + CoA. The protein operates within lipid metabolism; fatty acid beta-oxidation. Catalyzes the final step of fatty acid oxidation in which acetyl-CoA is released and the CoA ester of a fatty acid two carbons shorter is formed. In Pectobacterium carotovorum subsp. carotovorum (strain PC1), this protein is 3-ketoacyl-CoA thiolase.